Reading from the N-terminus, the 95-residue chain is Ferredoxin-like protein FixX (95 aa).

This sequence belongs to the bacterial-type ferredoxin family. FixX subfamily.

Functionally, could be part of an electron transfer system required for anaerobic carnitine reduction. Could be a 3Fe-4S cluster-containing protein. This is Ferredoxin-like protein FixX (fixX) from Salmonella typhimurium (strain LT2 / SGSC1412 / ATCC 700720).